The following is a 596-amino-acid chain: SUN domain-containing protein 4 (596 aa).

Residues 28-48 (VSLSLVFLIWGLVFLSTLWIS) form a helical membrane-spanning segment. 2 disordered regions span residues 58 to 98 (LVDS…LSSD) and 139 to 158 (KQSEINNNTVPGNDTETTGS). Residues 66–77 (EPDDERADETAE) are compositionally biased toward acidic residues. Polar residues-rich tracts occupy residues 80 to 95 (DATSLESTSVHSNPGL) and 141 to 158 (SEINNNTVPGNDTETTGS). The SUN domain maps to 179 to 343 (SNSRDKSLSG…SLLEVYGVDA (165 aa)). The segment covering 366–396 (DTEQKEKKTMQAKESFESDEDKSKQKEKEQE) has biased composition (basic and acidic residues). The disordered stretch occupies residues 366-410 (DTEQKEKKTMQAKESFESDEDKSKQKEKEQEASPENAVVKDEVSL). Positions 475-544 (ASKREKEVET…LERLEWMEKK (70 aa)) form a coiled coil. A run of 2 helical transmembrane segments spans residues 545–565 (GVVVFTICVGFGTIAVVAVVF) and 576–596 (GGLAWLLLLISSTFVMFILSL).

In terms of assembly, forms homomers and heteromers with SUN3. Interacts with SUN1, SUN2 and TIK.

The protein localises to the nucleus membrane. Its subcellular location is the endoplasmic reticulum membrane. In terms of biological role, encodes a member of the mid-SUN subfamily of SUN-domain proteins that is localized to both the nuclear envelope and the ER. It is involved in early seed development and nuclear morphology. [TAIR]. The protein is SUN domain-containing protein 4 of Arabidopsis thaliana (Mouse-ear cress).